The sequence spans 149 residues: MADQLTEEQIAEFKEAFSLFDKDGDGTITTKELGTVMRSLGQNPTEAELLVMINEVDADGNGTIDFPEFLTMMARKMKDSDSEEEIKEAFKVFDKDGNGYISAAELRHVMTNLGEKLSEDEVEEMIREADVDGDGQINYEEFVKMMMSK.

The residue at position 2 (alanine 2) is an N-acetylalanine. 4 consecutive EF-hand domains span residues 8-43 (EQIAEFKEAFSLFDKDGDGTITTKELGTVMRSLGQN), 44-79 (PTEAELLVMINEVDADGNGTIDFPEFLTMMARKMKD), 81-116 (DSEEEIKEAFKVFDKDGNGYISAAELRHVMTNLGEK), and 117-149 (LSEDEVEEMIREADVDGDGQINYEEFVKMMMSK). Residues aspartate 21, aspartate 23, aspartate 25, threonine 27, glutamate 32, aspartate 57, aspartate 59, asparagine 61, threonine 63, glutamate 68, aspartate 94, aspartate 96, asparagine 98, tyrosine 100, glutamate 105, aspartate 130, aspartate 132, aspartate 134, glutamine 136, and glutamate 141 each coordinate Ca(2+).

It belongs to the calmodulin family.

In terms of biological role, calmodulin mediates the control of a large number of enzymes, ion channels and other proteins by Ca(2+). Among the enzymes to be stimulated by the calmodulin-Ca(2+) complex are a number of protein kinases and phosphatases. This is Calmodulin (CMD1) from Blastocladiella emersonii (Aquatic fungus).